Consider the following 79-residue polypeptide: Conotoxin ArMKLT2-031 (79 aa).

Residues 1 to 22 (MKLTCVLIIAVLFLTACQLTTG) form the signal peptide. Residues 23-46 (ETYSRGEQKDHALRSTDKNSKLTR) constitute a propeptide that is removed on maturation. Glutamine 47 bears the Pyrrolidone carboxylic acid mark. Intrachain disulfides connect cysteine 48–cysteine 62, cysteine 55–cysteine 66, and cysteine 61–cysteine 73.

It belongs to the conotoxin O1 superfamily. Expressed by the venom duct.

The protein resides in the secreted. The polypeptide is Conotoxin ArMKLT2-031 (Conus arenatus (Sand-dusted cone)).